The chain runs to 428 residues: RNA-binding protein 34 (428 aa).

Disordered regions lie at residues 1-106 (MALR…KVKV) and 127-152 (DLEE…TDGE). The residue at position 147 (Lys147) is an N6-acetyllysine. 2 consecutive RRM domains span residues 183 to 278 (RTVF…LASE) and 285 to 362 (RSVF…RSVN). A Glycyl lysine isopeptide (Lys-Gly) (interchain with G-Cter in SUMO2) cross-link involves residue Lys240. At Ser286 the chain carries Phosphoserine. A disordered region spans residues 361–428 (VNKEKLKQQN…GQTKKPRKQK (68 aa)). The span at 408–428 (LMKKKKGQKKKGQTKKPRKQK) shows a compositional bias: basic residues.

Belongs to the RRM RBM34 family.

It is found in the nucleus. Its subcellular location is the nucleolus. The protein is RNA-binding protein 34 (Rbm34) of Rattus norvegicus (Rat).